We begin with the raw amino-acid sequence, 226 residues long: Ribonuclease 3 (226 aa).

The region spanning 4-127 is the RNase III domain; it reads LEEFEKKLGY…VMGAIYLEKG (124 aa). Glu40 provides a ligand contact to Mg(2+). The active site involves Asp44. Residues Asn113 and Glu116 each contribute to the Mg(2+) site. Residue Glu116 is part of the active site. One can recognise a DRBM domain in the interval 154-223; it reads DFKTALQEFT…AKEALKILKA (70 aa).

Belongs to the ribonuclease III family. In terms of assembly, homodimer. It depends on Mg(2+) as a cofactor.

The protein resides in the cytoplasm. The enzyme catalyses Endonucleolytic cleavage to 5'-phosphomonoester.. Functionally, digests double-stranded RNA. Involved in the processing of primary rRNA transcript to yield the immediate precursors to the large and small rRNAs (23S and 16S). Processes some mRNAs, and tRNAs when they are encoded in the rRNA operon. Processes pre-crRNA and tracrRNA of type II CRISPR loci if present in the organism. The protein is Ribonuclease 3 of Nitratiruptor sp. (strain SB155-2).